Consider the following 134-residue polypeptide: Small ribosomal subunit protein uS8c (134 aa).

It belongs to the universal ribosomal protein uS8 family. Part of the 30S ribosomal subunit.

Its subcellular location is the plastid. The protein resides in the chloroplast. In terms of biological role, one of the primary rRNA binding proteins, it binds directly to 16S rRNA central domain where it helps coordinate assembly of the platform of the 30S subunit. This Aethionema cordifolium (Lebanon stonecress) protein is Small ribosomal subunit protein uS8c (rps8).